Here is a 381-residue protein sequence, read N- to C-terminus: E3 ubiquitin-protein ligase KCMF1 (381 aa).

Ser-2 is modified (N-acetylserine). Ser-2 bears the Phosphoserine mark. The ZZ-type zinc finger occupies 4–60 (HEGVSCDACLKGNFRGRRYKCLICYDYDLCASCYESGATTTRHTTDHPMQCILTRVD). Residues Cys-9, Cys-12, Cys-24, Cys-27, Cys-33, Cys-36, His-46, and His-50 each contribute to the Zn(2+) site. The C2H2-type zinc finger occupies 78–101 (FTCPYCGKMGYTETSLQEHVTSEH). A disordered region spans residues 154–193 (MFHPGRGLGGPRARRSNMHFTSSSTGGLSSSQSSYSPSNR). A phosphoserine mark is found at Ser-169, Ser-189, and Ser-212. Residues 175 to 191 (SSSTGGLSSSQSSYSPS) show a composition bias toward low complexity. Residues 225-257 (SQLQQLQMQLQLERQHAQAARQQLETARNATRR) are a coiled coil. The interval 294 to 314 (TRLNDPKMSETERQSMESERA) is disordered. Residues 297–314 (NDPKMSETERQSMESERA) show a composition bias toward basic and acidic residues. A phosphoserine mark is found at Ser-335 and Ser-336.

Belongs to the KCMF1 family. As to quaternary structure, component of the SIFI complex, composed of KCMF1, UBR4 and calmodulin (CALM1, CALM2 or CALM3). Spleen, small intestine, ovary, peripheral blood, lung, kidney and pancreas. Expressed at low levels in the thymus, prostate, testis, colon, heart, brain, placenta and liver.

The protein localises to the cytoplasm. Its subcellular location is the late endosome. The protein resides in the lysosome. The catalysed reaction is S-ubiquitinyl-[E2 ubiquitin-conjugating enzyme]-L-cysteine + [acceptor protein]-L-lysine = [E2 ubiquitin-conjugating enzyme]-L-cysteine + N(6)-ubiquitinyl-[acceptor protein]-L-lysine.. It functions in the pathway protein modification; protein ubiquitination. Its function is as follows. E3 ubiquitin-protein ligase which accepts ubiquitin from an E2 ubiquitin-conjugating enzyme and then transfers it to targeted substrates, promoting their degradation by the proteasome. Together with UBR4, component of the N-end rule pathway: ubiquitinates proteins bearing specific N-terminal residues that are destabilizing according to the N-end rule, leading to their degradation. Does not ubiquitinate proteins that are acetylated at the N-terminus. Together with UBR4, part of a protein quality control pathway that catalyzes ubiquitination and degradation of proteins that have been oxidized in response to reactive oxygen species (ROS): recognizes proteins with an Arg-CysO3(H) degron at the N-terminus, and mediates assembly of heterotypic 'Lys-63'-/'Lys-27'-linked branched ubiquitin chains on oxidized proteins, leading to their degradation by autophagy. Catalytic component of the SIFI complex, a multiprotein complex required to inhibit the mitochondrial stress response after a specific stress event has been resolved: ubiquitinates and degrades (1) components of the HRI-mediated signaling of the integrated stress response, such as DELE1 and EIF2AK1/HRI, as well as (2) unimported mitochondrial precursors. Within the SIFI complex, UBR4 initiates ubiquitin chain that are further elongated or branched by KCMF1. This chain is E3 ubiquitin-protein ligase KCMF1, found in Homo sapiens (Human).